We begin with the raw amino-acid sequence, 124 residues long: Replication restart protein PriB (124 aa).

Residues 12–112 (IDNCLTLTGI…LHTEQIEFID (101 aa)) enclose the SSB domain.

The protein belongs to the PriB family. In terms of assembly, homodimer. Interacts with PriA and DnaT. Component of the replication restart primosome. Primosome assembly occurs via a 'hand-off' mechanism. PriA binds to replication forks, subsequently PriB then DnaT bind; DnaT then displaces ssDNA to generate the helicase loading substrate.

Its function is as follows. Involved in the restart of stalled replication forks, which reloads the replicative helicase on sites other than the origin of replication; the PriA-PriB pathway is the major replication restart pathway. During primosome assembly it facilitates complex formation between PriA and DnaT on DNA; stabilizes PriA on DNA. Stimulates the DNA unwinding activity of PriA helicase. This is Replication restart protein PriB from Haemophilus ducreyi (strain 35000HP / ATCC 700724).